We begin with the raw amino-acid sequence, 115 residues long: MKGTLLLLALLVTGELGFQTTEACIPFYEAFGAVVLGNKQVLDVVLSKFNATDKEREAFEKIQECYNDGGLKSKLLDTRVVYEVTVNSPCKEYYTKDTILKVEDLLFQIQRHIMG.

Positions 1–23 (MKGTLLLLALLVTGELGFQTTEA) are cleaved as a signal peptide.

Belongs to the secretoglobin family.

The protein resides in the secreted. In Mesocricetus auratus (Golden hamster), this protein is Androgen-binding protein homolog.